Reading from the N-terminus, the 132-residue chain is Small ribosomal subunit protein uS8 (132 aa).

This sequence belongs to the universal ribosomal protein uS8 family. In terms of assembly, part of the 30S ribosomal subunit. Contacts proteins S5 and S12.

In terms of biological role, one of the primary rRNA binding proteins, it binds directly to 16S rRNA central domain where it helps coordinate assembly of the platform of the 30S subunit. In Streptococcus gordonii (strain Challis / ATCC 35105 / BCRC 15272 / CH1 / DL1 / V288), this protein is Small ribosomal subunit protein uS8.